The primary structure comprises 241 residues: 2-C-methyl-D-erythritol 4-phosphate cytidylyltransferase (241 aa).

Belongs to the IspD/TarI cytidylyltransferase family. IspD subfamily.

The enzyme catalyses 2-C-methyl-D-erythritol 4-phosphate + CTP + H(+) = 4-CDP-2-C-methyl-D-erythritol + diphosphate. Its pathway is isoprenoid biosynthesis; isopentenyl diphosphate biosynthesis via DXP pathway; isopentenyl diphosphate from 1-deoxy-D-xylulose 5-phosphate: step 2/6. In terms of biological role, catalyzes the formation of 4-diphosphocytidyl-2-C-methyl-D-erythritol from CTP and 2-C-methyl-D-erythritol 4-phosphate (MEP). The chain is 2-C-methyl-D-erythritol 4-phosphate cytidylyltransferase from Pseudoalteromonas translucida (strain TAC 125).